Here is a 113-residue protein sequence, read N- to C-terminus: Iron-sulfur cluster insertion protein ErpA (113 aa).

3 residues coordinate iron-sulfur cluster: Cys-41, Cys-105, and Cys-107.

This sequence belongs to the HesB/IscA family. In terms of assembly, homodimer. It depends on iron-sulfur cluster as a cofactor.

In terms of biological role, required for insertion of 4Fe-4S clusters for at least IspG. The protein is Iron-sulfur cluster insertion protein ErpA of Vibrio vulnificus (strain YJ016).